The primary structure comprises 231 residues: Phosphoglycolate phosphatase (231 aa).

The active-site Nucleophile is the Asp-9. Mg(2+) is bound by residues Asp-9 and Asp-11. Catalysis depends on Asp-11, which acts as the Proton donor. Residue Lys-154 coordinates substrate. Mg(2+) is bound by residues Asp-177 and Asp-181.

It belongs to the archaeal SPP-like hydrolase family. As to quaternary structure, homodimer. Requires Mg(2+) as cofactor.

The catalysed reaction is 2-phosphoglycolate + H2O = glycolate + phosphate. In terms of biological role, catalyzes the dephosphorylation of 2-phosphoglycolate. Has phosphatase activity towards p-nitrophenylphosphate (in vitro). The chain is Phosphoglycolate phosphatase from Pyrococcus horikoshii (strain ATCC 700860 / DSM 12428 / JCM 9974 / NBRC 100139 / OT-3).